Consider the following 92-residue polypeptide: Putative transmembrane protein ORF92 (92 aa).

Transmembrane regions (helical) follow at residues phenylalanine 11–isoleucine 28, phenylalanine 32–serine 52, and phenylalanine 54–glycine 74.

Its subcellular location is the host membrane. In Acidianus convivator (ABV), this protein is Putative transmembrane protein ORF92.